Reading from the N-terminus, the 485-residue chain is NADH-quinone oxidoreductase subunit N (485 aa).

14 helical membrane-spanning segments follow: residues 8 to 28 (LIAL…MLSI), 35 to 55 (FLNA…LWFV), 71 to 91 (GFAM…CTFA), 105 to 125 (FYLL…ANHL), 127 to 147 (ALFL…GYAF), 159 to 179 (YTIL…LVYA), 203 to 223 (LLAG…LVPF), 235 to 255 (PAPV…GVVM), 271 to 291 (VVLG…ALSQ), 297 to 317 (LLGY…IALQ), 326 to 346 (VGVY…VVSL), 373 to 393 (AAVM…LGFI), 408 to 430 (WWLV…RVAV), and 455 to 475 (IVVL…QPLI).

It belongs to the complex I subunit 2 family. As to quaternary structure, NDH-1 is composed of 13 different subunits. Subunits NuoA, H, J, K, L, M, N constitute the membrane sector of the complex.

It is found in the cell inner membrane. The enzyme catalyses a quinone + NADH + 5 H(+)(in) = a quinol + NAD(+) + 4 H(+)(out). NDH-1 shuttles electrons from NADH, via FMN and iron-sulfur (Fe-S) centers, to quinones in the respiratory chain. The immediate electron acceptor for the enzyme in this species is believed to be ubiquinone. Couples the redox reaction to proton translocation (for every two electrons transferred, four hydrogen ions are translocated across the cytoplasmic membrane), and thus conserves the redox energy in a proton gradient. This Salmonella dublin (strain CT_02021853) protein is NADH-quinone oxidoreductase subunit N.